The sequence spans 695 residues: MSNLAEVAPALDEDKIVTFPGSPFQLYQPFPPAGDQPEAIRQLVEGIEDGLSFQTLLGVTGSGKTYTMANVIARMGRPAIVFAPNKTLAAQLYSEFREFFPRNAVEYFVSYYDYYQPEAYVPQRDLFIEKDSSINEHIEQMRLSATKSLLERRDTIIVATVSAIYGIGNPNEYHQMILTLRTGDKISQRDVIARLIAMQYTRNETDFQRGTFRVRGDTIDIFPAEHAEMAVRLEMFDDEVESLQFFDPLTGRVRQKIPRFTVYPSSHYVTPRETVLRAIEDIKAELRDRLEFFHKENRLVEVQRLEQRTRFDLEMLSELGFCKGIENYSRHLSGAKPGEPPPTLVDYLPSDALMFLDESHVLIGQLNGMYNGDRARKTTLVEYGFRLPSALDNRPLKFEEFERKMRQVMFVSATPAQFEKEHAGQVVEQVVRPTGLVDPIIIVRPATTQVDDLLSEINLRVEAGERVLVTTLTKRMAEQLTEFLSENGVKVRYLHSDIDTVERVEIIRDLRLGTFDVLVGINLLREGLDIPEVSLVAILDADKEGFLRAERSLIQTIGRAARNVNGTAILYADRITDSMRKAIDETERRRAKQMAFNEANGITPRGVIKRIKDIIDGVYDAGEVKAELLAAQERARYEDMSEKQVSKEIKRLEKLMMDHAKNLEFEKAAQVRDQLAKLKAQLFGASGEEAPMPPV.

Positions 45–434 (EGIEDGLSFQ…QVVEQVVRPT (390 aa)) constitute a Helicase ATP-binding domain. 58 to 65 (GVTGSGKT) is an ATP binding site. The short motif at 111-134 (YYDYYQPEAYVPQRDLFIEKDSSI) is the Beta-hairpin element. Residues 449–602 (QVDDLLSEIN…QMAFNEANGI (154 aa)) enclose the Helicase C-terminal domain. The 36-residue stretch at 646 to 681 (SKEIKRLEKLMMDHAKNLEFEKAAQVRDQLAKLKAQ) folds into the UVR domain.

The protein belongs to the UvrB family. Forms a heterotetramer with UvrA during the search for lesions. Interacts with UvrC in an incision complex.

The protein resides in the cytoplasm. Its function is as follows. The UvrABC repair system catalyzes the recognition and processing of DNA lesions. A damage recognition complex composed of 2 UvrA and 2 UvrB subunits scans DNA for abnormalities. Upon binding of the UvrA(2)B(2) complex to a putative damaged site, the DNA wraps around one UvrB monomer. DNA wrap is dependent on ATP binding by UvrB and probably causes local melting of the DNA helix, facilitating insertion of UvrB beta-hairpin between the DNA strands. Then UvrB probes one DNA strand for the presence of a lesion. If a lesion is found the UvrA subunits dissociate and the UvrB-DNA preincision complex is formed. This complex is subsequently bound by UvrC and the second UvrB is released. If no lesion is found, the DNA wraps around the other UvrB subunit that will check the other stand for damage. This chain is UvrABC system protein B, found in Cupriavidus pinatubonensis (strain JMP 134 / LMG 1197) (Cupriavidus necator (strain JMP 134)).